The following is a 477-amino-acid chain: Probable cytosolic Fe-S cluster assembly factor GG21400 (477 aa).

[4Fe-4S] cluster is bound by residues Cys23, Cys68, Cys71, Cys74, Cys187, Cys243, Cys395, and Cys399.

The protein belongs to the NARF family.

Its function is as follows. Component of the cytosolic iron-sulfur (Fe/S) protein assembly machinery. Required for maturation of extramitochondrial Fe/S proteins. The chain is Probable cytosolic Fe-S cluster assembly factor GG21400 from Drosophila erecta (Fruit fly).